The chain runs to 194 residues: Fe/S biogenesis protein NfuA (194 aa).

[4Fe-4S] cluster is bound by residues Cys152 and Cys155.

This sequence belongs to the NfuA family. As to quaternary structure, homodimer. [4Fe-4S] cluster serves as cofactor.

Its function is as follows. Involved in iron-sulfur cluster biogenesis. Binds a 4Fe-4S cluster, can transfer this cluster to apoproteins, and thereby intervenes in the maturation of Fe/S proteins. Could also act as a scaffold/chaperone for damaged Fe/S proteins. The chain is Fe/S biogenesis protein NfuA from Pseudomonas entomophila (strain L48).